Consider the following 297-residue polypeptide: Glycine--tRNA ligase alpha subunit (297 aa).

The protein belongs to the class-II aminoacyl-tRNA synthetase family. In terms of assembly, tetramer of two alpha and two beta subunits.

It localises to the cytoplasm. The catalysed reaction is tRNA(Gly) + glycine + ATP = glycyl-tRNA(Gly) + AMP + diphosphate. This is Glycine--tRNA ligase alpha subunit from Sulfurihydrogenibium sp. (strain YO3AOP1).